A 545-amino-acid polypeptide reads, in one-letter code: MATNYIFVTGGVVSSLGKGIAAASLAAILEARGLNVTIMKLDPYINVDPGTMSPTQHGEVFVTQDGAETDLDLGHYERFIRTKMTKRNNFTTGKIYSEVLRKERRGDYLGATIQVIPHITNEIKDRVIAGAQGHDVVIVEVGGTVGDIESLPFLEALRQLAVQVGREHTLFMHLTLVPYIPTAGEVKTKPTQHSVKELLSIGIQPDVLICRSDRMIPPNERAKIALFCNVAERAVISLKDVNSIYQIPALLKSQGLDDFVCERFRLTCPEADLTEWEQVLYKQANPVGEVTIGMVGKYTELPDAYKSVNEALKHAGLTNRLSVNIKYIDSQDVETKGVEVLKGIDGILVPGGFGYRGVEGKIRTAQYARENKIPYLGICLGMQIALIEYARNVAGLTKANSSEFDKDCEQPVVALITEWQDAEGNTEVRTDESDLGGTMRLGAQQCHLVSGSRARELYGKETIEERHRHRYEVNNTLLPQIEKAGLKVTGLSADKKLVEIIEVPNHPWFVACQFHPEFTSTPRDGHPLFAGFVKAAYENHKKSVK.

An amidoligase domain region spans residues 1–266 (MATNYIFVTG…DDFVCERFRL (266 aa)). Ser-14 is a binding site for CTP. Residue Ser-14 coordinates UTP. ATP is bound by residues 15 to 20 (SLGKGI) and Asp-72. Mg(2+)-binding residues include Asp-72 and Glu-140. CTP-binding positions include 147–149 (DIE), 187–192 (KTKPTQ), and Lys-223. UTP-binding positions include 187 to 192 (KTKPTQ) and Lys-223. ATP is bound at residue 239 to 241 (KDV). The Glutamine amidotransferase type-1 domain maps to 291–542 (TIGMVGKYTE…VKAAYENHKK (252 aa)). Gly-352 lines the L-glutamine pocket. Cys-379 functions as the Nucleophile; for glutamine hydrolysis in the catalytic mechanism. Residues 380-383 (LGMQ), Glu-403, and Arg-470 contribute to the L-glutamine site. Active-site residues include His-515 and Glu-517.

This sequence belongs to the CTP synthase family. In terms of assembly, homotetramer.

The enzyme catalyses UTP + L-glutamine + ATP + H2O = CTP + L-glutamate + ADP + phosphate + 2 H(+). It catalyses the reaction L-glutamine + H2O = L-glutamate + NH4(+). It carries out the reaction UTP + NH4(+) + ATP = CTP + ADP + phosphate + 2 H(+). Its pathway is pyrimidine metabolism; CTP biosynthesis via de novo pathway; CTP from UDP: step 2/2. With respect to regulation, allosterically activated by GTP, when glutamine is the substrate; GTP has no effect on the reaction when ammonia is the substrate. The allosteric effector GTP functions by stabilizing the protein conformation that binds the tetrahedral intermediate(s) formed during glutamine hydrolysis. Inhibited by the product CTP, via allosteric rather than competitive inhibition. Its function is as follows. Catalyzes the ATP-dependent amination of UTP to CTP with either L-glutamine or ammonia as the source of nitrogen. Regulates intracellular CTP levels through interactions with the four ribonucleotide triphosphates. The chain is CTP synthase from Haemophilus influenzae (strain ATCC 51907 / DSM 11121 / KW20 / Rd).